The following is a 127-amino-acid chain: Large ribosomal subunit protein bL17 (127 aa).

This sequence belongs to the bacterial ribosomal protein bL17 family. In terms of assembly, part of the 50S ribosomal subunit. Contacts protein L32.

The polypeptide is Large ribosomal subunit protein bL17 (Xanthomonas axonopodis pv. citri (strain 306)).